The chain runs to 585 residues: BURP domain-containing protein 17 (585 aa).

Positions 1–20 (MDRIFARFFCFLLIAAVSHA) are cleaved as a signal peptide. Positions 63-82 (GQRNYKSSVSHVAERSHRVD) are disordered. One can recognise a BURP domain in the interval 363–584 (FFLEKNLQQG…QPDAVVWTRR (222 aa)).

In terms of tissue distribution, expressed in leaves.

The sequence is that of BURP domain-containing protein 17 (BURP17) from Oryza sativa subsp. japonica (Rice).